The sequence spans 349 residues: UDP-N-acetylenolpyruvoylglucosamine reductase (349 aa).

One can recognise an FAD-binding PCMH-type domain in the interval 17–187; that stretch reads VNESADLIIQ…TAITLRLNKQ (171 aa). The active site involves Arg-163. The active-site Proton donor is Ser-233. Glu-328 is a catalytic residue.

It belongs to the MurB family. It depends on FAD as a cofactor.

The protein localises to the cytoplasm. The catalysed reaction is UDP-N-acetyl-alpha-D-muramate + NADP(+) = UDP-N-acetyl-3-O-(1-carboxyvinyl)-alpha-D-glucosamine + NADPH + H(+). It functions in the pathway cell wall biogenesis; peptidoglycan biosynthesis. In terms of biological role, cell wall formation. This chain is UDP-N-acetylenolpyruvoylglucosamine reductase, found in Aliivibrio fischeri (strain ATCC 700601 / ES114) (Vibrio fischeri).